The primary structure comprises 433 residues: Anthranilate synthase component 1 (433 aa).

L-tryptophan-binding positions include Ser29 and 219–221 (PYT). Residue 253 to 254 (GT) coordinates chorismate. Glu280 contributes to the Mg(2+) binding site. Residues Tyr368, Arg388, 402 to 404 (GAG), and Gly404 each bind chorismate. Glu417 serves as a coordination point for Mg(2+).

This sequence belongs to the anthranilate synthase component I family. Heterotetramer consisting of two non-identical subunits: a beta subunit (TrpG) and a large alpha subunit (TrpE). Requires Mg(2+) as cofactor.

The enzyme catalyses chorismate + L-glutamine = anthranilate + pyruvate + L-glutamate + H(+). It participates in amino-acid biosynthesis; L-tryptophan biosynthesis; L-tryptophan from chorismate: step 1/5. With respect to regulation, feedback inhibited by tryptophan. In terms of biological role, part of a heterotetrameric complex that catalyzes the two-step biosynthesis of anthranilate, an intermediate in the biosynthesis of L-tryptophan. In the first step, the glutamine-binding beta subunit (TrpG) of anthranilate synthase (AS) provides the glutamine amidotransferase activity which generates ammonia as a substrate that, along with chorismate, is used in the second step, catalyzed by the large alpha subunit of AS (TrpE) to produce anthranilate. In the absence of TrpG, TrpE can synthesize anthranilate directly from chorismate and high concentrations of ammonia. This Thermococcus kodakarensis (strain ATCC BAA-918 / JCM 12380 / KOD1) (Pyrococcus kodakaraensis (strain KOD1)) protein is Anthranilate synthase component 1 (trpE).